Here is a 741-residue protein sequence, read N- to C-terminus: Catalase-peroxidase (741 aa).

Residues 1–23 (MLKKIVTALGMSGMLLASSNAIA) form the signal peptide. The tryptophyl-tyrosyl-methioninium (Trp-Tyr) (with M-249) cross-link spans 102 to 223 (WHDAGTYRIY…YAATQMGLIY (122 aa)). Residue His103 is the Proton acceptor of the active site. The tryptophyl-tyrosyl-methioninium (Tyr-Met) (with W-102) cross-link spans 223 to 249 (YVNPEGPDGKPDIKGAASEIRQAFRAM). His264 serves as a coordination point for heme b.

This sequence belongs to the peroxidase family. Peroxidase/catalase subfamily. Homodimer or homotetramer. Heme b serves as cofactor. Formation of the three residue Trp-Tyr-Met cross-link is important for the catalase, but not the peroxidase activity of the enzyme.

The catalysed reaction is H2O2 + AH2 = A + 2 H2O. It carries out the reaction 2 H2O2 = O2 + 2 H2O. Bifunctional enzyme with both catalase and broad-spectrum peroxidase activity. In Francisella tularensis subsp. tularensis (strain FSC 198), this protein is Catalase-peroxidase.